A 263-amino-acid polypeptide reads, in one-letter code: Cell division protein DivIB (263 aa).

Topologically, residues Met1 to Leu32 are cytoplasmic. A helical transmembrane segment spans residues Ile33–Ile53. Positions Thr51 to Tyr123 are alpha. The POTRA domain occupies Ser54–Tyr123. Residues Ser54–Asn263 lie on the Extracellular side of the membrane. Positions Lys124–Gly251 are beta. The interval Ser229 to Asn263 is gamma.

The protein belongs to the FtsQ/DivIB family. DivIB subfamily. In terms of assembly, interacts with FtsL, DivIC and PBP-2B.

The protein localises to the cell membrane. Its function is as follows. Cell division protein that may be involved in stabilizing or promoting the assembly of the division complex. Plays an essential role in division at high temperatures, maybe by protecting FtsL from degradation or by promoting formation of the FtsL-DivIC complex. May modulate the transpeptidase activity of PBP-2B. Also required for efficient sporulation at all temperatures. Could be directly involved in the engulfment process or be required to form a sporulation septum competent for engulfment. Influences the Spo0J/Soj system of chromosome segregation. In Bacillus subtilis (strain 168), this protein is Cell division protein DivIB.